The sequence spans 78 residues: Large ribosomal subunit protein bL28 (78 aa).

Positions 1 to 29 are disordered; that stretch reads MSAHCQVTGRKPSFGKSVSHSHRRTSRRW.

Belongs to the bacterial ribosomal protein bL28 family.

This Corynebacterium glutamicum (strain ATCC 13032 / DSM 20300 / JCM 1318 / BCRC 11384 / CCUG 27702 / LMG 3730 / NBRC 12168 / NCIMB 10025 / NRRL B-2784 / 534) protein is Large ribosomal subunit protein bL28.